Reading from the N-terminus, the 119-residue chain is MVALESAHLVGAGGALGALCRHYLAGAIQRETFPLGTLTVNAFGSFALGLLTFAGVTGDAALLVGVGACGSFTTFSSFSVETVRLWENGYVALAALNAVGNLACALVGIGLAWGIVRIV.

Residues 46-66 traverse the membrane as a helical segment; that stretch reads FALGLLTFAGVTGDAALLVGV. The Na(+) site is built by G70 and T73. Residues 96–116 form a helical membrane-spanning segment; it reads LNAVGNLACALVGIGLAWGIV.

The protein belongs to the fluoride channel Fluc/FEX (TC 1.A.43) family.

It localises to the cell membrane. It catalyses the reaction fluoride(in) = fluoride(out). With respect to regulation, na(+) is not transported, but it plays an essential structural role and its presence is essential for fluoride channel function. Functionally, fluoride-specific ion channel. Important for reducing fluoride concentration in the cell, thus reducing its toxicity. This chain is Fluoride-specific ion channel FluC 2, found in Haloarcula marismortui (strain ATCC 43049 / DSM 3752 / JCM 8966 / VKM B-1809) (Halobacterium marismortui).